A 101-amino-acid chain; its full sequence is Secreted enzymes activator (101 aa).

A compositionally biased stretch (basic residues) spans 1–10 (MSRRRRRASA). Disordered stretches follow at residues 1–26 (MSRRRRRASATRRSAAVSPPHTPYGS) and 45–101 (TRLA…NGRG). A compositionally biased stretch (low complexity) spans 45–60 (TRLAASSRASRAAVGS). Residues 55–74 (RAAVGSFDGAKNRPASSRRQ) constitute a DNA-binding region (H-T-H motif).

Functionally, increases the production of several extracellular enzymes, like alkaline phosphatase, amylase, protease or lipase. When present in high concentrations, delays the production of pigments and sporulation. The sequence is that of Secreted enzymes activator (saf) from Streptomyces griseus.